A 627-amino-acid chain; its full sequence is (-)-alpha-terpineol synthase, chloroplastic (627 aa).

A chloroplast-targeting transit peptide spans 1–52 (MDLISVLPSASKSCVCLHKPLSSSTHKLKPFCKTIRILVMPRRWEFARPSMS). Residues Asp-378, Asp-382, and Asp-530 each contribute to the Mg(2+) site. Residues 378 to 382 (DDMYD) carry the DDXXD motif motif.

Belongs to the terpene synthase family. Tpsd subfamily. It depends on Mg(2+) as a cofactor. Mn(2+) is required as a cofactor.

It localises to the plastid. The protein localises to the chloroplast. It carries out the reaction (2E)-geranyl diphosphate + H2O = (S)-alpha-terpineol + diphosphate. It functions in the pathway terpene metabolism; oleoresin biosynthesis. Its function is as follows. Involved in defensive oleoresin formation in conifers in response to insect attack or other injury. Involved in monoterpene (C10) olefins biosynthesis. Produces 57.3% alpha-terpineol (15.1% (+)/84.9% (-)), 27.6% limonene (25.2% (+)/74.8% (-)), 8% terpinolene, 4.7% beta-pinene (14.8% (+)/85.2% (-)), 1.3% alpha-pinene (100% (+)) and 1.1% myrcene. This Pinus taeda (Loblolly pine) protein is (-)-alpha-terpineol synthase, chloroplastic (PT10).